The sequence spans 229 residues: Clathrin light chain (229 aa).

Disordered stretches follow at residues 1–24 and 76–132; these read MSQFPALEDFDDGLVTAPVDDSKN and EMQA…KLRE. The span at 107–132 shows a compositional bias: basic and acidic residues; that stretch reads EPVRKWKEDQMKRIQERDESSKKLRE. Position 229 is a phosphoserine (Ser-229).

Belongs to the clathrin light chain family. In terms of assembly, clathrin coats are formed from molecules containing 3 heavy chains and 3 light chains.

Its subcellular location is the cytoplasmic vesicle membrane. It is found in the membrane. The protein resides in the coated pit. Clathrin is the major protein of the polyhedral coat of coated pits and vesicles. This Schizosaccharomyces pombe (strain 972 / ATCC 24843) (Fission yeast) protein is Clathrin light chain (clc1).